A 634-amino-acid polypeptide reads, in one-letter code: Threonine--tRNA ligase (634 aa).

Residues 1–61 (MINITLPDGS…DHDASLRIIT (61 aa)) enclose the TGS domain. The interval 243-534 (DHRRIGKAQD…LIEHHAGAFP (292 aa)) is catalytic. 3 residues coordinate Zn(2+): C334, H385, and H511.

It belongs to the class-II aminoacyl-tRNA synthetase family. As to quaternary structure, homodimer. The cofactor is Zn(2+).

Its subcellular location is the cytoplasm. It catalyses the reaction tRNA(Thr) + L-threonine + ATP = L-threonyl-tRNA(Thr) + AMP + diphosphate + H(+). In terms of biological role, catalyzes the attachment of threonine to tRNA(Thr) in a two-step reaction: L-threonine is first activated by ATP to form Thr-AMP and then transferred to the acceptor end of tRNA(Thr). Also edits incorrectly charged L-seryl-tRNA(Thr). This is Threonine--tRNA ligase from Xanthomonas axonopodis pv. citri (strain 306).